A 692-amino-acid polypeptide reads, in one-letter code: Putative ESX-1 scaffolding and assembly protein SaeA (692 aa).

Residues 1-21 (MGERGELVSDLHPSDDHDADP) show a composition bias toward basic and acidic residues. Disordered regions lie at residues 1–23 (MGER…DPRL) and 87–134 (PAAP…TTGF). A compositionally biased stretch (pro residues) spans 89 to 107 (APEPDPPPVPEPQPEPEPG).

In terms of biological role, may be involved in assembly of the ESX-1 / type VII specialized secretion system (T7SS), which exports several proteins including EsxA and EsxB. Involved in DNA conjugation in recipient (MKD8) but not donor (mc(2)155) strain. This chain is Putative ESX-1 scaffolding and assembly protein SaeA (saeA), found in Mycolicibacterium smegmatis (strain MKD8) (Mycobacterium smegmatis).